The sequence spans 331 residues: uncharacterized protein (331 aa).

The protein belongs to the IIV-6 335L family.

This is an uncharacterized protein from Invertebrate iridescent virus 6 (IIV-6).